Reading from the N-terminus, the 443-residue chain is Xaa-Pro dipeptidase (443 aa).

Residues aspartate 246, aspartate 257, histidine 339, glutamate 384, and glutamate 423 each contribute to the Mn(2+) site.

It belongs to the peptidase M24B family. Bacterial-type prolidase subfamily. Mn(2+) is required as a cofactor.

It carries out the reaction Xaa-L-Pro dipeptide + H2O = an L-alpha-amino acid + L-proline. Splits dipeptides with a prolyl residue in the C-terminal position. This chain is Xaa-Pro dipeptidase, found in Yersinia pestis bv. Antiqua (strain Nepal516).